The chain runs to 179 residues: Centromere protein R (179 aa).

The interval 1–79 (MSAKRSLKLD…RLSRRGQPQT (79 aa)) is disordered. The segment covering 30 to 50 (NSYSPTTGTCQISPFSSPTSH) has biased composition (polar residues). The segment covering 51 to 64 (NAEDLRNGLSHGDE) has biased composition (basic and acidic residues). Positions 172–176 (LQLLL) match the LXXLL motif motif.

The protein resides in the nucleus. The protein localises to the chromosome. It localises to the centromere. It is found in the kinetochore. Functionally, transcription coregulator that can have both coactivator and corepressor functions. Involved in the coactivation of nuclear receptors for retinoid X (RXRs) and thyroid hormone (TRs) in a ligand-dependent fashion. Probable component of a centromeric complex involved in assembly of kinetochore proteins, mitotic progression and chromosome segregation. The chain is Centromere protein R (CENPR) from Gallus gallus (Chicken).